The sequence spans 155 residues: Mitochondrial fission 1 protein (155 aa).

The Cytoplasmic portion of the chain corresponds to 1–131 (MTKVDFWPTL…DKIQKETLKG (131 aa)). Residues 132–149 (VVVAGGVLAGAVAVASFF) form a helical membrane-spanning segment. Residues 150–155 (LRNKRR) are Mitochondrial intermembrane-facing.

The protein belongs to the FIS1 family. Interacts with DNM1 and MDV1.

It is found in the mitochondrion outer membrane. In terms of biological role, has a role in mitochondrial fission. Has a role in outer membrane fission but not matrix separation. Required for targeting MDV1 to the mitochondria. Regulates the assembly of DNM1 into punctate structures, in the mitochondrial tubules, promoting mitochondrial membrane constriction and/or division. The sequence is that of Mitochondrial fission 1 protein (FIS1) from Saccharomyces cerevisiae (strain ATCC 204508 / S288c) (Baker's yeast).